The chain runs to 953 residues: Glutamate receptor 3.5 (953 aa).

The first 29 residues, 1–29 (MGFFVMIRDVSMGFMLLCISALWVLPIQG), serve as a signal peptide directing secretion. The Extracellular portion of the chain corresponds to 30-606 (AGRESFSRNS…SPWSFLKPFT (577 aa)). N-linked (GlcNAc...) asparagine glycosylation is found at Asn38, Asn95, Asn223, Asn371, Asn397, Asn436, Asn454, and Asn569. Residues 607–627 (IEMWAVTGALFLFVGAVIWIL) form a helical membrane-spanning segment. Residues 628–636 (EHRFNEEFR) lie on the Cytoplasmic side of the membrane. A helical transmembrane segment spans residues 637-657 (GPPRRQIITVFWFSFSTMFFS). Over 658–668 (HRENTVSTLGR) the chain is Cytoplasmic. Residues 669 to 689 (FVLLVWLFVVLIINSSYTASL) form a helical membrane-spanning segment. Over 690–850 (TSILTVQQLT…TENYQISVQS (161 aa)) the chain is Extracellular. The helical transmembrane segment at 851–871 (FWGLFLICGVVWFIALTLFCW) threads the bilayer. Over 872–953 (KVFWQYQRLR…SQSKDHETPQ (82 aa)) the chain is Cytoplasmic. Residues 928–953 (EKSSKKLKDGQSSAENSQSKDHETPQ) are disordered.

The protein belongs to the glutamate-gated ion channel (TC 1.A.10.1) family. As to quaternary structure, may form heteromers. As to expression, expressed predominantly in roots. Also detected in shoots.

The protein resides in the membrane. Functionally, glutamate-gated receptor that probably acts as a non-selective cation channel. May be involved in light-signal transduction and calcium homeostasis via the regulation of calcium influx into cells. In Arabidopsis thaliana (Mouse-ear cress), this protein is Glutamate receptor 3.5 (GLR3.5).